The chain runs to 354 residues: Protein-glutamate methylesterase/protein-glutamine glutaminase (354 aa).

The 118-residue stretch at 6-123 folds into the Response regulatory domain; sequence RVLIVDDSAV…SQSLETLSAA (118 aa). Position 57 is a 4-aspartylphosphate (aspartate 57). One can recognise a CheB-type methylesterase domain in the interval 159–351; the sequence is ARTTHQLLAV…GDLLKQLQTR (193 aa). Catalysis depends on residues serine 171, histidine 197, and aspartate 293.

Belongs to the CheB family. Post-translationally, phosphorylated by CheA. Phosphorylation of the N-terminal regulatory domain activates the methylesterase activity.

It localises to the cytoplasm. The catalysed reaction is [protein]-L-glutamate 5-O-methyl ester + H2O = L-glutamyl-[protein] + methanol + H(+). The enzyme catalyses L-glutaminyl-[protein] + H2O = L-glutamyl-[protein] + NH4(+). Involved in chemotaxis. Part of a chemotaxis signal transduction system that modulates chemotaxis in response to various stimuli. Catalyzes the demethylation of specific methylglutamate residues introduced into the chemoreceptors (methyl-accepting chemotaxis proteins or MCP) by CheR. Also mediates the irreversible deamidation of specific glutamine residues to glutamic acid. In Bdellovibrio bacteriovorus (strain ATCC 15356 / DSM 50701 / NCIMB 9529 / HD100), this protein is Protein-glutamate methylesterase/protein-glutamine glutaminase.